The chain runs to 33 residues: YQLESQEGFVPFSVSEIEQRVTVTTGSKTVVTL.

Belongs to the calycin superfamily. Fatty-acid binding protein (FABP) family. As to expression, intestine.

The protein localises to the cytoplasm. Functionally, FABPs are thought to play a role in the intracellular transport of long-chain fatty acids and their acyl-CoA esters. This chain is Fatty acid-binding protein, intestinal (fabp2), found in Rhamdia sapo (South American catfish).